The following is a 399-amino-acid chain: uncharacterized protein (399 aa).

Residues 197-206 show a composition bias toward polar residues; sequence ENSSASSVTS. A disordered region spans residues 197 to 224; that stretch reads ENSSASSVTSEECEQDVMDEQSAEDNEE. The segment covering 207-224 has biased composition (acidic residues); the sequence is EECEQDVMDEQSAEDNEE.

This is an uncharacterized protein from Diadromus pulchellus (Parasitic wasp).